We begin with the raw amino-acid sequence, 270 residues long: uncharacterized protein (270 aa).

A compositionally biased stretch (basic and acidic residues) spans 22–31 (EAPQRTEASR). The disordered stretch occupies residues 22–42 (EAPQRTEASRTHPSPFLALPG).

This is an uncharacterized protein from Homo sapiens (Human).